A 467-amino-acid chain; its full sequence is Inactive pancreatic lipase-related protein 1 (467 aa).

The N-terminal stretch at 1 to 17 (MVSIWTIALFLLGAAKA) is a signal peptide. 2 disulfides stabilise this stretch: C21/C27 and C109/C120. N157 carries an N-linked (GlcNAc...) asparagine glycan. The active-site Nucleophile is the S171. D194 (charge relay system) is an active-site residue. Ca(2+) contacts are provided by E205, R208, D210, and D213. C255 and C279 are joined by a disulfide. H281 acts as the Charge relay system in catalysis. 3 disulfides stabilise this stretch: C303–C314, C317–C322, and C451–C467. A PLAT domain is found at 356–467 (WRYGVSITLS…EDVLLTLTPC (112 aa)).

This sequence belongs to the AB hydrolase superfamily. Lipase family. As to expression, detected in pancreas (at protein level).

It localises to the secreted. Functionally, may function as inhibitor of dietary triglyceride digestion. Lacks detectable lipase activity towards triglycerides, diglycerides, phosphatidylcholine, galactolipids or cholesterol esters (in vitro). In Canis lupus familiaris (Dog), this protein is Inactive pancreatic lipase-related protein 1 (PNLIPRP1).